The primary structure comprises 407 residues: Serine/threonine transporter SstT (407 aa).

Transmembrane regions (helical) follow at residues 12 to 32 (GNLI…GISS), 42 to 62 (LGIL…FILI), 81 to 101 (IIIL…LANF), 141 to 161 (ALSS…GIAL), 179 to 199 (VLKI…GLVA), 218 to 238 (ILLV…IVFF), 245 to 267 (FPLI…SSAA), 288 to 308 (ISIP…IAIL), and 330 to 350 (IIAT…LLLI).

The protein belongs to the dicarboxylate/amino acid:cation symporter (DAACS) (TC 2.A.23) family.

The protein resides in the cell inner membrane. It carries out the reaction L-serine(in) + Na(+)(in) = L-serine(out) + Na(+)(out). The enzyme catalyses L-threonine(in) + Na(+)(in) = L-threonine(out) + Na(+)(out). In terms of biological role, involved in the import of serine and threonine into the cell, with the concomitant import of sodium (symport system). The chain is Serine/threonine transporter SstT from Campylobacter jejuni subsp. jejuni serotype O:6 (strain 81116 / NCTC 11828).